A 381-amino-acid chain; its full sequence is tRNA pseudouridine synthase D (381 aa).

Asp81 (nucleophile) is an active-site residue. The TRUD domain occupies 160–335; sequence GMPNYFGSQR…TLGSRRFFWV (176 aa).

The protein belongs to the pseudouridine synthase TruD family.

The enzyme catalyses uridine(13) in tRNA = pseudouridine(13) in tRNA. In terms of biological role, responsible for synthesis of pseudouridine from uracil-13 in transfer RNAs. The chain is tRNA pseudouridine synthase D from Helicobacter pylori (strain HPAG1).